The following is an 86-amino-acid chain: Small ribosomal subunit protein bS20 (86 aa).

The tract at residues 1–22 is disordered; the sequence is MANIKSQIKRIRTNERRRLRNQ. Residues 7 to 20 are compositionally biased toward basic residues; sequence QIKRIRTNERRRLR.

This sequence belongs to the bacterial ribosomal protein bS20 family.

Its function is as follows. Binds directly to 16S ribosomal RNA. The sequence is that of Small ribosomal subunit protein bS20 from Mycolicibacterium smegmatis (strain ATCC 700084 / mc(2)155) (Mycobacterium smegmatis).